The sequence spans 306 residues: MPDYDLITILGPTASGKTPFAAALAHELNTEIISADSRQIYRGMDLGTGKDLADYTVDGHPIPYHLIDIADPGYKYNVFEYQRDFLISYESIKQKGCLPVLCGGTGMYLESVLKGYKLMPVPENPELRARLANHSLEELTEILKQYKTLHNSTDVDTVKRAIRAIEIEEYYAVHPVPEREFPKLNSLIIGVDIDRELRREKITRRLKQRLDEGMVDEVRRLTEQGISPDDLIYYGLEYKFLTLYVIGKLTYEEMFTELETAIHQFAKRQMTWFRGMERRGFTIHWVSAELPMEEKIAFVIEKLRGN.

11–18 provides a ligand contact to ATP; it reads GPTASGKT. 13-18 is a binding site for substrate; that stretch reads TASGKT. Residues 36 to 39 are interaction with substrate tRNA; the sequence is DSRQ.

Belongs to the IPP transferase family. As to quaternary structure, monomer. Mg(2+) serves as cofactor.

It carries out the reaction adenosine(37) in tRNA + dimethylallyl diphosphate = N(6)-dimethylallyladenosine(37) in tRNA + diphosphate. Its function is as follows. Catalyzes the transfer of a dimethylallyl group onto the adenine at position 37 in tRNAs that read codons beginning with uridine, leading to the formation of N6-(dimethylallyl)adenosine (i(6)A). This chain is tRNA dimethylallyltransferase 2, found in Bacteroides thetaiotaomicron (strain ATCC 29148 / DSM 2079 / JCM 5827 / CCUG 10774 / NCTC 10582 / VPI-5482 / E50).